We begin with the raw amino-acid sequence, 476 residues long: Probable cytosolic Fe-S cluster assembly factor GJ13047 (476 aa).

[4Fe-4S] cluster-binding residues include Cys23, Cys68, Cys71, Cys74, Cys187, Cys243, Cys395, and Cys399.

It belongs to the NARF family.

In terms of biological role, component of the cytosolic iron-sulfur (Fe/S) protein assembly machinery. Required for maturation of extramitochondrial Fe/S proteins. The chain is Probable cytosolic Fe-S cluster assembly factor GJ13047 from Drosophila virilis (Fruit fly).